Consider the following 47-residue polypeptide: ATP-dependent zinc metalloprotease FTSH, chloroplastic (47 aa).

In the N-terminal section; belongs to the AAA ATPase family. The protein in the C-terminal section; belongs to the peptidase M41 family. Requires Zn(2+) as cofactor.

The protein resides in the plastid. The protein localises to the chloroplast membrane. Its function is as follows. Seems to act as an ATP-dependent zinc metallopeptidase. The chain is ATP-dependent zinc metalloprotease FTSH, chloroplastic from Populus euphratica (Euphrates poplar).